A 1746-amino-acid polypeptide reads, in one-letter code: MNDLNLRVAALKVCAHPKRFAELRDALVPLPNTWIAAPHDFVLQFAAAKSSAEQVQVVKDVFYGEQAQDHEDVAHFLADLLLASPLKHAVRNQLTKLFSDNALAKQNASPHRRHSKEHLLEALQQSLGEMANSLAVITPPVSHERTNDVFVSANACLQNFPFGREALGKQVHRFAPLLTTALERYWADICDPTLELSPTRRNELYLYVQNALRFLVSLLAEWSDKLRLFEDQRFPGTSNAVAQKVARYYDTPWDVRSIAALLIGHLARFSGTFKAYVEDCSRPKAEQDVPIQMAALLVLRPVDYTENATLALAILKRIVAVSELKSTVTNLLVFLSKHLFIYSKSLGEMHAHLPDDQKLLYQRILAQLQVFALQNISSDTDSVRHMSSALLHQVLQHAQAAGQEELFQVVYRQFEDRAAYLNASCMALEQLVAVAGVSKSIENCPSLFGVIFPRHLGCEDCVDALFKAMMVSAHKTEPFAEWQSRWFGLLLAAIRVPEKRRQVIEELIAQAVQLEPTRLAQVLLPDDRLPLSCKLAAILGVRQLSARRQNLLRGMKEEVEQALIGLDDHTRLLALRFLVETPRPSELLNADQMGAIELYVRHNANNPSAHLRQLGYGLLQKALKRVHFGLVEYRKSRTPASQEVLQFLIRLIRTLAQNLFPTANYGRRWLSLRLLRDCLELSEMVGITFSELGIELPTEALMACLGDSYEHNKVLAAQLLERFQSHSLFKPDEMIELLLSLRPSDSATGAFQLQVYCKASRVQSEMPTPTHGGTIHEPLTFRALQWCLQHLREGLRLAQLDLGEAAKLNPLYGLLFASRHLLQQLKLKELAKEPQWRQYIDELVTMCLAVSSVVLPVVSSASPEGHLPETCDQETDQPLTNVLDRQLSREELLQVRTTPQMILLCAWRSSKEVCLILGELVQRAPLEEEEDEEQQQQQGDFLLSRAQLEAIGEHFLQLLAETKHRGAFEQAYVGFTMLCRRFWHSESVRLNQLPGQWVDEAMAMVSGQEEWAGKGARLCATRRSAGMPFMLQALVGTELKLGTHATLYRCMNRLLEVCERRTGGAAGITARSHALNIMRALFRSSELAELVTEFMARGIQCALDGLLLAEEWAERNSATLLLAALIVRVFGVERARLETGELHVRNRMTGRIFFTRYPQLFDYFHAALQRESEQMDAGGGGSENASGKRRQAVQLEAMLLMLSRLYPSSLEGAESTLNLSEFVPFLIRICHSHDLMTREMAALVVANFVTQEQALAEIRRIVVELKALQLRLKNTEAANTKLNTNVLHGQLLLLLHLHRLVRWTRPSLTRMQLHTLAELAAPLLQHDACAFSALVAVMVAAMEDAVEPGLLDFQLLEQIGVVYLLNHKEVQSRCQQLGISNRFYQIFGLHLHRLRGISQGIVLHIVEDLAETIWALDELKVELWLYILLQRSLSEQNSLVSEQDIEHFEFSRDIRRYFETLSREQREEVGQELYESPAVRSSVLHMMHMIKSSKNSCWSLQLAGRLAALQTLLRDPGLELNQLVQRCSEEHSTHQEAGLLLGLRRLIGESKMLERKHWLPMLNYAQRLVHPGQPVYLRHQAAELCDSLARNHLRDQLVAGTTDVDIGLVGRFSGLVLLLLHDDAEWVRHRAVQLVCGAGLRTRSGAGQEQEQSAMAPLILPSALIPPFLDTMIGKLTFDDFNMVQRLVDIIAEPFTTADAMELFDKQENNHYCERNHVLTELWDARGRADPRARTPTIPTGYQIFK.

Residues 1252–1286 (EQALAEIRRIVVELKALQLRLKNTEAANTKLNTNV) adopt a coiled-coil conformation.

It belongs to the THADA family. As to quaternary structure, interacts with SERCA. In terms of tissue distribution, detected in the larval fat body, salivary glands and wing imaginal disks (at protein level).

The protein resides in the endoplasmic reticulum. Functionally, together with methyltransferase Trm7-32, methylates the 2'-O-ribose of nucleotides at position 32 of the anticodon loop of substrate tRNAs. Plays a key role in energy homeostasis by regulating the balance between energy storage and heat production. Functions by negatively regulating Ca(2+) signaling pathways that are involved in heat production and maintaining correct lipid storage in the fat body. Regulates Ca(2+) signaling pathways by reducing the activity of the calcium-transporting ATPase SERCA possibly by promoting uncoupling of SERCA ATP hydrolysis from calcium pumping. May also function in the nervous system to control feeding behavior. This Drosophila melanogaster (Fruit fly) protein is tRNA (32-2'-O)-methyltransferase regulator THADA.